Here is a 323-residue protein sequence, read N- to C-terminus: Ficolin-2 (323 aa).

Positions 1–26 (MDTRGVAAAMRPLVLLVAFLCTAAPA) are cleaved as a signal peptide. The 51-residue stretch at 52–102 (GLPGAAGPKGEAGASGPKGGQGPPGAPGEPGPPGPKGDRGEKGEPGPKGES) folds into the Collagen-like domain. The span at 55-66 (GAAGPKGEAGAS) shows a compositional bias: low complexity. The disordered stretch occupies residues 55–107 (GAAGPKGEAGASGPKGGQGPPGAPGEPGPPGPKGDRGEKGEPGPKGESWETEQ). Over residues 75-86 (PGAPGEPGPPGP) the composition is skewed to pro residues. Over residues 87–102 (KGDRGEKGEPGPKGES) the composition is skewed to basic and acidic residues. The Fibrinogen C-terminal domain maps to 106–323 (EQCLTGPRTC…KVSEMKFRAT (218 aa)). 2 disulfide bridges follow: C108/C136 and C115/C143. A glycan (N-linked (GlcNAc...) asparagine) is linked at N249. Positions 259, 261, and 265 each coordinate Ca(2+). A disulfide bridge links C267 with C280. Residues N302 and N310 are each glycosylated (N-linked (GlcNAc...) asparagine).

Belongs to the ficolin lectin family. In terms of assembly, homotrimer. Interacts with elastin. Interacts with MASP1 and MASP2. As to expression, mainly expressed in skeletal muscle.

The protein resides in the secreted. Its function is as follows. May function in innate immunity through activation of the lectin complement pathway. Calcium-dependent and GlcNAc-binding lectin. In Sus scrofa (Pig), this protein is Ficolin-2 (FCN2).